The primary structure comprises 726 residues: Catalase-peroxidase (726 aa).

Positions 85–208 (WHSAGSYRIH…FAATEMGLIY (124 aa)) form a cross-link, tryptophyl-tyrosyl-methioninium (Trp-Tyr) (with M-234). Catalysis depends on histidine 86, which acts as the Proton acceptor. The segment at residues 208–234 (YVNPEGPMGNPDPSGSAKEIRLAFTRM) is a cross-link (tryptophyl-tyrosyl-methioninium (Tyr-Met) (with W-85)). Position 249 (histidine 249) interacts with heme b.

Belongs to the peroxidase family. Peroxidase/catalase subfamily. Homodimer or homotetramer. Heme b serves as cofactor. Post-translationally, formation of the three residue Trp-Tyr-Met cross-link is important for the catalase, but not the peroxidase activity of the enzyme.

The catalysed reaction is H2O2 + AH2 = A + 2 H2O. It catalyses the reaction 2 H2O2 = O2 + 2 H2O. Functionally, bifunctional enzyme with both catalase and broad-spectrum peroxidase activity. The sequence is that of Catalase-peroxidase from Pseudothermotoga lettingae (strain ATCC BAA-301 / DSM 14385 / NBRC 107922 / TMO) (Thermotoga lettingae).